Reading from the N-terminus, the 547-residue chain is Chaperonin GroEL (547 aa).

ATP-binding positions include 30-33 (TLGP), 87-91 (DGTTT), G414, 478-480 (DAL), and D494.

The protein belongs to the chaperonin (HSP60) family. Forms a cylinder of 14 subunits composed of two heptameric rings stacked back-to-back. Interacts with the co-chaperonin GroES.

Its subcellular location is the cytoplasm. The enzyme catalyses ATP + H2O + a folded polypeptide = ADP + phosphate + an unfolded polypeptide.. In terms of biological role, together with its co-chaperonin GroES, plays an essential role in assisting protein folding. The GroEL-GroES system forms a nano-cage that allows encapsulation of the non-native substrate proteins and provides a physical environment optimized to promote and accelerate protein folding. This chain is Chaperonin GroEL, found in Desulforudis audaxviator (strain MP104C).